A 154-amino-acid polypeptide reads, in one-letter code: Large ribosomal subunit protein uL13 (154 aa).

This sequence belongs to the universal ribosomal protein uL13 family. In terms of assembly, part of the 50S ribosomal subunit.

Its function is as follows. This protein is one of the early assembly proteins of the 50S ribosomal subunit, although it is not seen to bind rRNA by itself. It is important during the early stages of 50S assembly. The protein is Large ribosomal subunit protein uL13 of Mesorhizobium japonicum (strain LMG 29417 / CECT 9101 / MAFF 303099) (Mesorhizobium loti (strain MAFF 303099)).